The sequence spans 498 residues: Polyphosphate:AMP phosphotransferase (498 aa).

2 PPK2 regions span residues I11–A234 and L269–A491.

It belongs to the polyphosphate kinase 2 (PPK2) family. Class II subfamily.

It carries out the reaction [phosphate](n) + ADP = [phosphate](n+1) + AMP. In terms of biological role, uses inorganic polyphosphate (polyP) as a donor to convert AMP to ADP. Can also convert GMP to GDP, with lower efficiency. The chain is Polyphosphate:AMP phosphotransferase from Pseudomonas syringae pv. tomato (strain ATCC BAA-871 / DC3000).